We begin with the raw amino-acid sequence, 385 residues long: Glucans biosynthesis protein C (385 aa).

10 helical membrane passes run 17–37, 60–80, 91–111, 137–157, 173–193, 212–232, 245–262, 274–294, 311–331, and 338–358; these read AWLM…SHTW, MQVF…RYPL, VGIP…IMLQ, ISHL…VWIF, KFSM…YAVI, FIVM…LAFI, RGST…LLNQ, TESV…FSFG, ASLF…AYIT, and WLGF…LYEI.

The protein belongs to the acyltransferase 3 family. OpgC subfamily.

It localises to the cell membrane. It functions in the pathway glycan metabolism; osmoregulated periplasmic glucan (OPG) biosynthesis. Functionally, necessary for the succinyl substitution of periplasmic glucans. Could catalyze the transfer of succinyl residues from the cytoplasmic side of the membrane to the nascent glucan backbones on the periplasmic side of the membrane. This chain is Glucans biosynthesis protein C, found in Escherichia coli O81 (strain ED1a).